Reading from the N-terminus, the 496-residue chain is COP9 signalosome complex subunit 3 (496 aa).

Residues 243–411 (QASHCLGIVI…GNETTTMLRF (169 aa)) form the PCI domain. A disordered region spans residues 468-496 (GSSERSGVVGSTEADGGGDLDEDLMGDGR). Over residues 483-496 (GGGDLDEDLMGDGR) the composition is skewed to acidic residues.

Belongs to the CSN3 family. In terms of assembly, component of the COP9 signalosome (CSN) complex.

The protein resides in the cytoplasm. Its subcellular location is the nucleus. Its function is as follows. Component of the COP9 signalosome (CSN) complex that acts as an regulator of the ubiquitin (Ubl) conjugation pathway by mediating the deneddylation of the cullin subunit of SCF-type E3 ubiquitin-protein ligase complexes. The CSN complex seems to link protein degradation to sexual development. This Emericella nidulans (strain FGSC A4 / ATCC 38163 / CBS 112.46 / NRRL 194 / M139) (Aspergillus nidulans) protein is COP9 signalosome complex subunit 3 (csnC).